A 204-amino-acid polypeptide reads, in one-letter code: Small ribosomal subunit protein uS4 (204 aa).

The tract at residues 20–46 is disordered; that stretch reads WGRPKSPINKREYGPGEHGQRRRKPSD. Basic and acidic residues predominate over residues 28-38; that stretch reads NKREYGPGEHG. The S4 RNA-binding domain maps to 93-156; sequence TRLDAVVYRM…RQMPLILEAL (64 aa).

It belongs to the universal ribosomal protein uS4 family. Part of the 30S ribosomal subunit. Contacts protein S5. The interaction surface between S4 and S5 is involved in control of translational fidelity.

Functionally, one of the primary rRNA binding proteins, it binds directly to 16S rRNA where it nucleates assembly of the body of the 30S subunit. In terms of biological role, with S5 and S12 plays an important role in translational accuracy. The sequence is that of Small ribosomal subunit protein uS4 from Rhodospirillum rubrum (strain ATCC 11170 / ATH 1.1.1 / DSM 467 / LMG 4362 / NCIMB 8255 / S1).